The chain runs to 390 residues: MNLHEYQSKHLLKKYNIPVPASEVVFNPDAAVDAAAKIGGDRWVVKAQVHAGGRGKAGGVRLVKNKEELKSAVKALLGTRLVTYQTDERGQPVNQILVEQTSDIARELYLGAVIDRASQRIVFMASTEGGVEIEKVAEKSPEKILKVTVDPAIGLQPFQCRQLFFGLGLQDLKQMRSFTDIVMGLYRLFTERDLSLLEINPLVITGSGELICLDAKINIDDSALYRQSELREMRDTTQEDEHETMAQQWELNYIKLDGNIGCMVNGAGLAMATMDLIKLSGGDPANFLDVGGSATKERVTEAFRIIVSDKNVKGILVNIFGGIVRCDLIADGIISAVKEVGIDVPVVVRLEGNNAQLGAKKLADSSMNIIAAKGFADAAEQIVKQVGVIA.

One can recognise an ATP-grasp domain in the interval lysine 9–methionine 245. ATP is bound by residues lysine 46, glycine 53–glycine 55, glutamate 99, serine 102, and glutamate 107. 2 residues coordinate Mg(2+): asparagine 200 and aspartate 214. Substrate-binding positions include asparagine 265 and glycine 322–valine 324.

The protein belongs to the succinate/malate CoA ligase beta subunit family. Heterotetramer of two alpha and two beta subunits. Mg(2+) serves as cofactor.

The enzyme catalyses succinate + ATP + CoA = succinyl-CoA + ADP + phosphate. It catalyses the reaction GTP + succinate + CoA = succinyl-CoA + GDP + phosphate. Its pathway is carbohydrate metabolism; tricarboxylic acid cycle; succinate from succinyl-CoA (ligase route): step 1/1. Succinyl-CoA synthetase functions in the citric acid cycle (TCA), coupling the hydrolysis of succinyl-CoA to the synthesis of either ATP or GTP and thus represents the only step of substrate-level phosphorylation in the TCA. The beta subunit provides nucleotide specificity of the enzyme and binds the substrate succinate, while the binding sites for coenzyme A and phosphate are found in the alpha subunit. The chain is Succinate--CoA ligase [ADP-forming] subunit beta from Coxiella burnetii (strain Dugway 5J108-111).